The chain runs to 184 residues: Protein GrpE (184 aa).

Polar residues predominate over residues 1-26 (MANEQNEQAQDIQNEQVEQSNEQTQA). The interval 1–34 (MANEQNEQAQDIQNEQVEQSNEQTQAEGVEQAND) is disordered.

This sequence belongs to the GrpE family. Homodimer.

The protein localises to the cytoplasm. Participates actively in the response to hyperosmotic and heat shock by preventing the aggregation of stress-denatured proteins, in association with DnaK and GrpE. It is the nucleotide exchange factor for DnaK and may function as a thermosensor. Unfolded proteins bind initially to DnaJ; upon interaction with the DnaJ-bound protein, DnaK hydrolyzes its bound ATP, resulting in the formation of a stable complex. GrpE releases ADP from DnaK; ATP binding to DnaK triggers the release of the substrate protein, thus completing the reaction cycle. Several rounds of ATP-dependent interactions between DnaJ, DnaK and GrpE are required for fully efficient folding. The polypeptide is Protein GrpE (Acinetobacter baumannii (strain AB307-0294)).